The primary structure comprises 1350 residues: uncharacterized protein (1350 aa).

Disordered regions lie at residues 348–371 and 923–944; these read SLVGAPSPSERVMKRKSERPLDDS and SKMEGGERDATGSSMDTVRGTG. The segment covering 923–932 has biased composition (basic and acidic residues); the sequence is SKMEGGERDA.

This is an uncharacterized protein from Ictalurid herpesvirus 1 (strain Auburn) (IcHV-1).